The sequence spans 903 residues: Alanine--tRNA ligase (903 aa).

Residues H581, H585, C693, and H697 each coordinate Zn(2+).

This sequence belongs to the class-II aminoacyl-tRNA synthetase family. The cofactor is Zn(2+).

It localises to the cytoplasm. It carries out the reaction tRNA(Ala) + L-alanine + ATP = L-alanyl-tRNA(Ala) + AMP + diphosphate. Catalyzes the attachment of alanine to tRNA(Ala) in a two-step reaction: alanine is first activated by ATP to form Ala-AMP and then transferred to the acceptor end of tRNA(Ala). Also edits incorrectly charged Ser-tRNA(Ala) and Gly-tRNA(Ala) via its editing domain. This Psychrobacter sp. (strain PRwf-1) protein is Alanine--tRNA ligase.